The sequence spans 275 residues: NH(3)-dependent NAD(+) synthetase (275 aa).

46–53 (GISGGQDS) provides a ligand contact to ATP. Aspartate 52 contacts Mg(2+). A deamido-NAD(+)-binding site is contributed by arginine 140. Threonine 160 is an ATP binding site. Glutamate 165 is a Mg(2+) binding site. Positions 173 and 180 each coordinate deamido-NAD(+). Lysine 189 and threonine 211 together coordinate ATP. 260–261 (HK) contributes to the deamido-NAD(+) binding site.

This sequence belongs to the NAD synthetase family. Homodimer.

The catalysed reaction is deamido-NAD(+) + NH4(+) + ATP = AMP + diphosphate + NAD(+) + H(+). Its pathway is cofactor biosynthesis; NAD(+) biosynthesis; NAD(+) from deamido-NAD(+) (ammonia route): step 1/1. Catalyzes the ATP-dependent amidation of deamido-NAD to form NAD. Uses ammonia as a nitrogen source. The polypeptide is NH(3)-dependent NAD(+) synthetase (Escherichia coli O127:H6 (strain E2348/69 / EPEC)).